The sequence spans 141 residues: MAIILGADAHGNALKELIKSFLQEESYDIIDVTDINSDFIDNTLAVAKAVNEAEGRLGIMVDAYGAGPFMVATKLKGMVAAEVSDERSAYMTRGHNNARMITIGAEIVGPELAKNIVKGFVTGPYDGGRHQIRVDMLNKMA.

The protein belongs to the LacAB/RpiB family. Heteromultimeric protein consisting of LacA and LacB.

The enzyme catalyses aldehydo-D-galactose 6-phosphate = keto-D-tagatose 6-phosphate. The protein operates within carbohydrate metabolism; D-galactose 6-phosphate degradation; D-tagatose 6-phosphate from D-galactose 6-phosphate: step 1/1. The chain is Galactose-6-phosphate isomerase subunit LacA 1 from Streptococcus pyogenes serotype M3 (strain SSI-1).